Here is a 271-residue protein sequence, read N- to C-terminus: Ribosomal RNA small subunit methyltransferase A (271 aa).

The S-adenosyl-L-methionine site is built by histidine 11, leucine 13, glycine 38, glutamate 58, aspartate 86, and asparagine 101.

This sequence belongs to the class I-like SAM-binding methyltransferase superfamily. rRNA adenine N(6)-methyltransferase family. RsmA subfamily.

It localises to the cytoplasm. It catalyses the reaction adenosine(1518)/adenosine(1519) in 16S rRNA + 4 S-adenosyl-L-methionine = N(6)-dimethyladenosine(1518)/N(6)-dimethyladenosine(1519) in 16S rRNA + 4 S-adenosyl-L-homocysteine + 4 H(+). In terms of biological role, specifically dimethylates two adjacent adenosines (A1518 and A1519) in the loop of a conserved hairpin near the 3'-end of 16S rRNA in the 30S particle. May play a critical role in biogenesis of 30S subunits. The chain is Ribosomal RNA small subunit methyltransferase A from Helicobacter pylori (strain P12).